A 227-amino-acid chain; its full sequence is UPF0173 metal-dependent hydrolase Tlet_1100 (227 aa).

This sequence belongs to the UPF0173 family.

The protein is UPF0173 metal-dependent hydrolase Tlet_1100 of Pseudothermotoga lettingae (strain ATCC BAA-301 / DSM 14385 / NBRC 107922 / TMO) (Thermotoga lettingae).